An 845-amino-acid chain; its full sequence is Protein arginine N-methyltransferase 9 (845 aa).

3 TPR repeats span residues 25 to 58 (VSRSLQSAEHCLGVQDFGTAYAHYLLVLSLAPEL), 67 to 100 (QYTLFRWAEELDALSRIQDLLGCYEQALELFPDD), and 101 to 134 (EVICNSMGEHLFRMGFRDEAAGYFHKAVKLNPDF). 2 SAM-dependent MTase PRMT-type domains span residues 137-466 (AKEN…YLRI) and 530-845 (NIPY…TVKQ).

This sequence belongs to the class I-like SAM-binding methyltransferase superfamily. Protein arginine N-methyltransferase family. In terms of assembly, found in a complex with PRMT9, SF3B2 and SF3B4. Interacts with SF3B2.

The protein localises to the cytoplasm. The catalysed reaction is L-arginyl-[protein] + 2 S-adenosyl-L-methionine = N(omega),N(omega)'-dimethyl-L-arginyl-[protein] + 2 S-adenosyl-L-homocysteine + 2 H(+). Arginine methyltransferase that can both catalyze the formation of omega-N monomethylarginine (MMA) and symmetrical dimethylarginine (sDMA). Specifically mediates the symmetrical dimethylation of SF3B2. Involved in the regulation of alternative splicing of pre-mRNA. This is Protein arginine N-methyltransferase 9 from Homo sapiens (Human).